The following is a 417-amino-acid chain: Serine hydroxymethyltransferase (417 aa).

Residues leucine 121 and 125–127 (GHL) contribute to the (6S)-5,6,7,8-tetrahydrofolate site. Lysine 229 bears the N6-(pyridoxal phosphate)lysine mark. 355–357 (SPF) contacts (6S)-5,6,7,8-tetrahydrofolate.

The protein belongs to the SHMT family. Homodimer. It depends on pyridoxal 5'-phosphate as a cofactor.

Its subcellular location is the cytoplasm. It catalyses the reaction (6R)-5,10-methylene-5,6,7,8-tetrahydrofolate + glycine + H2O = (6S)-5,6,7,8-tetrahydrofolate + L-serine. The protein operates within one-carbon metabolism; tetrahydrofolate interconversion. It participates in amino-acid biosynthesis; glycine biosynthesis; glycine from L-serine: step 1/1. Catalyzes the reversible interconversion of serine and glycine with tetrahydrofolate (THF) serving as the one-carbon carrier. This reaction serves as the major source of one-carbon groups required for the biosynthesis of purines, thymidylate, methionine, and other important biomolecules. Also exhibits THF-independent aldolase activity toward beta-hydroxyamino acids, producing glycine and aldehydes, via a retro-aldol mechanism. This chain is Serine hydroxymethyltransferase, found in Shewanella baltica (strain OS223).